A 637-amino-acid polypeptide reads, in one-letter code: Penicillin-binding protein 1A (637 aa).

Residues 62 to 224 (LIADLGSERR…NQYDPYSHPE (163 aa)) form a transglycosylase region. Residue glutamate 91 is the Proton donor; for transglycosylase activity of the active site. Residues 298 to 612 (EVYTNVDSKV…RLTPIVGDGF (315 aa)) form a transpeptidase region. The active-site Acyl-ester intermediate; for transpeptidase activity is serine 371.

In the N-terminal section; belongs to the glycosyltransferase 51 family. This sequence in the C-terminal section; belongs to the transpeptidase family.

Its subcellular location is the secreted. It carries out the reaction [GlcNAc-(1-&gt;4)-Mur2Ac(oyl-L-Ala-gamma-D-Glu-L-Lys-D-Ala-D-Ala)](n)-di-trans,octa-cis-undecaprenyl diphosphate + beta-D-GlcNAc-(1-&gt;4)-Mur2Ac(oyl-L-Ala-gamma-D-Glu-L-Lys-D-Ala-D-Ala)-di-trans,octa-cis-undecaprenyl diphosphate = [GlcNAc-(1-&gt;4)-Mur2Ac(oyl-L-Ala-gamma-D-Glu-L-Lys-D-Ala-D-Ala)](n+1)-di-trans,octa-cis-undecaprenyl diphosphate + di-trans,octa-cis-undecaprenyl diphosphate + H(+). The catalysed reaction is Preferential cleavage: (Ac)2-L-Lys-D-Ala-|-D-Ala. Also transpeptidation of peptidyl-alanyl moieties that are N-acyl substituents of D-alanine.. The protein operates within cell wall biogenesis; peptidoglycan biosynthesis. In terms of biological role, cell wall formation. The sequence is that of Penicillin-binding protein 1A (ponA) from Streptococcus oralis.